The primary structure comprises 119 residues: Ribonuclease P protein component (119 aa).

It belongs to the RnpA family. Consists of a catalytic RNA component (M1 or rnpB) and a protein subunit.

The enzyme catalyses Endonucleolytic cleavage of RNA, removing 5'-extranucleotides from tRNA precursor.. RNaseP catalyzes the removal of the 5'-leader sequence from pre-tRNA to produce the mature 5'-terminus. It can also cleave other RNA substrates such as 4.5S RNA. The protein component plays an auxiliary but essential role in vivo by binding to the 5'-leader sequence and broadening the substrate specificity of the ribozyme. The polypeptide is Ribonuclease P protein component (Clostridium acetobutylicum (strain ATCC 824 / DSM 792 / JCM 1419 / IAM 19013 / LMG 5710 / NBRC 13948 / NRRL B-527 / VKM B-1787 / 2291 / W)).